The sequence spans 965 residues: MASRQGSKSRKAGLKGADSTASSTTSSSKLYQETSIDGHSSPASSSAQSKQQFFSPDPLPQTAQRSKENVTVTVRFRPLSPREIRQGEEVAWYADGETIVRNEHNPTIAYAYDRVFGPTTTTRNVYDIAAHHVVNGAMEGINGTIFAYGVTSSGKTHTMHGDQRSPGIIPLAVKDAFSIIQETPNREFLLRISYMEIYNEVVNDLLNPAGHNLRIREDKQGTFVEGIKEEVVLSPAHALSLIAAGEEQRHVGSTNFNLLSSRSHTIFTLTIESSPLGDKSKGEAVHLSQLNLVDLAGSESSKVETSGVRRKEGSYINKSLLTLGTVISKLTDVRASHVPYRDSKLTRILQSSLSGHDRVSLICTVTPASSSSEETHNTLKFAHRAKHIEIQAEQNKIIDEKSLIKKYQREIRQLKEELEQLKQEIVPVPQLKDIGADDIVLLKQKLEDGQVKLQSRLEEEEEAKAALLSRIQRLTKLILVSTKNPQASRLPHRFNPRRRHSFGEEELAYLPYKRRDMMDDEQLDLYVSVEGNHEIRDNAYREEKKTRKHGLLNWLKPKKRDHSSSASDQSSVVKSNSTPSTPQGGGSHLHTESRLSEGSPLMEQLSEPREDREALEDSSHEMEIPETSNKMSDELDLLREQKKILSEEAALQLSSLKRMSDEAAKSPQNEEINEEIKVLNDDIKAKNDQIATLERQIMDFVMTSHEALDKSDIMQAVAELRDQLNEKSFELEVKAADNRIIQQTLNEKTCECEVLQEEVANLKQQLSEALELAQGTKIKELKQDAKELSESKEQLELRNRKLAEESSYAKGLASAAAVELKALSEEVAKLMNQNERLAAELATQKSPIAQRNKTGTTTNVRNNGRRESLAKRQEHDSPSMELKRELRMSKERELSYEAALGEKEQREAELERILEETKQREAYLENELANMWVLVSKLRRSQGADSEISDSISETRQTEQTEGSF.

Residues 1–69 (MASRQGSKSR…PQTAQRSKEN (69 aa)) form a disordered region. The segment covering 19–28 (STASSTTSSS) has biased composition (low complexity). Positions 29–38 (KLYQETSIDG) are enriched in polar residues. Residues 40–56 (SSPASSSAQSKQQFFSP) are compositionally biased toward low complexity. The Kinesin motor domain maps to 69 to 388 (NVTVTVRFRP…LKFAHRAKHI (320 aa)). Residue 149–156 (GVTSSGKT) coordinates ATP. Residues 389 to 483 (EIQAEQNKII…LTKLILVSTK (95 aa)) are a coiled coil. Over residues 551–561 (LLNWLKPKKRD) the composition is skewed to basic residues. Disordered stretches follow at residues 551–633 (LLNW…KMSD) and 842–888 (ATQK…ELRM). Over residues 564–577 (SSASDQSSVVKSNS) the composition is skewed to low complexity. The segment covering 606 to 623 (SEPREDREALEDSSHEME) has biased composition (basic and acidic residues). 2 coiled-coil regions span residues 628–703 (SNKM…FVMT) and 738–846 (NRII…TQKS). Positions 851–862 (RNKTGTTTNVRN) are enriched in low complexity. Over residues 864-888 (GRRESLAKRQEHDSPSMELKRELRM) the composition is skewed to basic and acidic residues. Residues 896-931 (YEAALGEKEQREAELERILEETKQREAYLENELANM) adopt a coiled-coil conformation. A disordered region spans residues 942-965 (QGADSEISDSISETRQTEQTEGSF). Positions 949-965 (SDSISETRQTEQTEGSF) are enriched in polar residues.

This sequence belongs to the TRAFAC class myosin-kinesin ATPase superfamily. Kinesin family. KIN-7 subfamily.

The protein localises to the plastid. It localises to the chloroplast. The chain is Kinesin-like protein KIN-7K, chloroplastic from Arabidopsis thaliana (Mouse-ear cress).